We begin with the raw amino-acid sequence, 1377 residues long: Neogenin (1377 aa).

Positions 1-2 (AA) are cleaved as a signal peptide. The Extracellular segment spans residues 3-1074 (AKNGSPPQSA…PTSPLDSNML (1072 aa)). 4 Ig-like C2-type domains span residues 21–114 (PLYF…RTAK), 121–206 (PRFT…EAEL), 198–305 (PKFS…AELT), and 310–395 (PEFL…AQLI). N-linked (GlcNAc...) asparagine glycosylation occurs at Asn42. Intrachain disulfides connect Cys43–Cys98, Cys142–Cys190, and Cys239–Cys289. Residue Asn179 is glycosylated (N-linked (GlcNAc...) asparagine). N-linked (GlcNAc...) asparagine glycosylation occurs at Asn295. Cys331 and Cys379 are disulfide-bonded. Fibronectin type-III domains follow at residues 410–504 (APRD…TQPE), 510–600 (PAPN…TLSD), 605–700 (APQN…TFES), 710–800 (VPSS…RPHT), 825–924 (PPVG…LVPT), and 926–1023 (PPKD…TPKA). N-linked (GlcNAc...) asparagine glycosylation is found at Asn439 and Asn458. N-linked (GlcNAc...) asparagine glycosylation is found at Asn608 and Asn684. An N-linked (GlcNAc...) asparagine glycan is attached at Asn878. Residues 1010–1066 (GPMSEAVQFRTPKADSSDKMPNDQALGSAGKGGRLPDLGSDYKPPMSGSNSPHGSPT) are disordered. Positions 1021–1030 (PKADSSDKMP) are enriched in basic and acidic residues. Positions 1056-1066 (SGSNSPHGSPT) are enriched in polar residues. A helical transmembrane segment spans residues 1075 to 1095 (LVIIVSIGVITIVVVVIIAVF). At 1096–1377 (CTRRTTSHQK…MKDLNAITTA (282 aa)) the chain is on the cytoplasmic side. Residues 1143–1281 (PIDKSPDPNP…SHPLKSFAVP (139 aa)) are disordered. A phosphoserine mark is found at Ser1147 and Ser1163. 3 stretches are compositionally biased toward polar residues: residues 1160–1176 (PRNS…MDSN), 1213–1238 (QPPQ…TCCT), and 1246–1265 (ATSS…QSLP). Phosphothreonine is present on Thr1167. Ser1317 is subject to Phosphoserine. At Thr1320 the chain carries Phosphothreonine. Ser1348, Ser1350, and Ser1351 each carry phosphoserine.

The protein belongs to the immunoglobulin superfamily. DCC family. Interacts with MYO10. Interacts with RGMA and RGMB. Interacts with BMP2, BMP4, BMP6, and BMP7.

The protein resides in the cell membrane. Functionally, multi-functional cell surface receptor regulating cell adhesion in many diverse developmental processes, including neural tube and mammary gland formation, myogenesis and angiogenesis. Receptor for members of the BMP, netrin, and repulsive guidance molecule (RGM) families. Netrin-Neogenin interactions result in a chemoattractive axon guidance response and cell-cell adhesion, the interaction between NEO1/Neogenin and RGMa and RGMb induces a chemorepulsive response. The sequence is that of Neogenin (Neo1) from Rattus norvegicus (Rat).